The chain runs to 1738 residues: Sodium leak channel NALCN (1738 aa).

Topologically, residues 1–36 are cytoplasmic; it reads MLKRKQSSRVEAQPVTDFGPDESLSDNADILWINKP. Residues 37 to 57 traverse the membrane as a helical segment; it reads WVHSLLRICAIISVIPVCMNT. At 58–65 the chain is on the extracellular side; that stretch reads PMTFEHYP. Residues 66-90 traverse the membrane as a helical segment; that stretch reads PLQYVTFTLDTLLMFLYTAEMIAKM. Over 91–106 the chain is Cytoplasmic; that stretch reads HIRGIVKGDSSYVKDR. Residues 107–129 form a helical membrane-spanning segment; it reads WCVFDGFMVFCLWVSLVLQVFEI. Residues 130–137 are Extracellular-facing; the sequence is ADIVDQMS. The helical; Voltage-sensor transmembrane segment at 138–158 threads the bilayer; sequence PWGMLRIPRPLIMIRAFRIYF. Over 159 to 173 the chain is Cytoplasmic; sequence RFELPRTRITNILKR. A helical transmembrane segment spans residues 174 to 199; that stretch reads SGEQIWSVSIFLLFFLLLYGILGVQM. Residues 200-269 lie on the Extracellular side of the membrane; that stretch reads FGTFTYHCVV…YSGFNEIGTS (70 aa). Disulfide bonds link Cys-207–Cys-239 and Cys-229–Cys-245. 2 N-linked (GlcNAc...) asparagine glycosylation sites follow: Asn-210 and Asn-216. The segment at residues 270–289 is an intramembrane region (pore-forming); sequence IFTVYEASSQEGWVFLMYRA. At 290–294 the chain is on the extracellular side; that stretch reads IDSFP. Residues 295–322 form a helical membrane-spanning segment; sequence RWRSYFYFITLIFFLAWLVKNVFIAVII. The Cytoplasmic segment spans residues 323-382; it reads ETFAEIRVQFQQMWGTRSSTTSTATTQMFHEDAAGGWQLVAVDVNKPQGRAPACLQKMMR. A helical membrane pass occupies residues 383–403; the sequence is SSVFHMFILSMVTVDVIVAAS. The Extracellular portion of the chain corresponds to 404-416; it reads NYYKGENFRRQYD. Residues 417–439 traverse the membrane as a helical segment; the sequence is EFYLAEVAFTVLFDLEALLKIWC. Residues 440 to 447 lie on the Cytoplasmic side of the membrane; the sequence is LGFTGYIS. Residues 448–468 form a helical membrane-spanning segment; sequence SSLHKFELLLVIGTTLHVYPD. Residues 469–472 lie on the Extracellular side of the membrane; the sequence is LYHS. Residues 473 to 492 traverse the membrane as a helical; Voltage-sensor segment; it reads QFTYFQVLRVVRLIKISPAL. The Cytoplasmic segment spans residues 493–502; sequence EDFVYKIFGP. Residues 503–530 traverse the membrane as a helical segment; sequence GKKLGSLVVFTASLLIVMSAISLQMFCF. The Extracellular portion of the chain corresponds to 531 to 543; that stretch reads VEELDRFTTFPRA. Residues 544-563 constitute an intramembrane region (pore-forming); the sequence is FMSMFQILTQEGWVDVMDQT. Over 564–569 the chain is Extracellular; it reads LNAVGH. A helical membrane pass occupies residues 570–599; the sequence is MWAPLVAIYFILYHLFATLILLSLFVAVIL. Topologically, residues 600–886 are cytoplasmic; that stretch reads DNLELDEDLK…QLYDLLGLVT (287 aa). The disordered stretch occupies residues 762 to 789; sequence QERRSLRHGSNSQRISRGKSLETLTQDH. A coiled-coil region spans residues 795-830; the sequence is YRNAQREDSEIKMIQEKKEQAEMKRKVQEEELRENH. Residues 887–906 form a helical membrane-spanning segment; it reads YLDWVMITVTICSCISMMFE. The Extracellular segment spans residues 907-915; that stretch reads SPFRRVMHA. The chain crosses the membrane as a helical span at residues 916–939; that stretch reads PTLQIAEYVFVIFMSIELNLKIMA. Over 940–947 the chain is Cytoplasmic; the sequence is DGLFFTPT. A helical membrane pass occupies residues 948-972; that stretch reads AVIRDFGGVMDIFIYLVSLIFLCWM. Over 973–980 the chain is Extracellular; the sequence is PQNVPAES. A helical; Voltage-sensor membrane pass occupies residues 981 to 1003; the sequence is GAQLLMVLRCLRPLRIFKLVPQM. Topologically, residues 1004–1015 are cytoplasmic; the sequence is RKVVRELFSGFK. The chain crosses the membrane as a helical span at residues 1016-1039; it reads EIFLVSILLLTLMLVFASFGVQLF. The Extracellular portion of the chain corresponds to 1040–1104; that stretch reads AGKLAKCNDP…NFNFDNVGNA (65 aa). A disulfide bridge links Cys-1046 with Cys-1057. A glycan (N-linked (GlcNAc...) asparagine) is linked at Asn-1064. Residues 1105-1124 constitute an intramembrane region (pore-forming); that stretch reads MLALFEVLSLKGWVEVRDVI. The Extracellular portion of the chain corresponds to 1125–1129; the sequence is IHRVG. Residues 1130–1159 form a helical membrane-spanning segment; sequence PIHGIYIHVFVFLGCMIGLTLFVGVVIANF. At 1160–1210 the chain is on the cytoplasmic side; the sequence is NENKGTALLTVDQRRWEDLKSRLKIAQPLHLPPRPDNDGFRAKMYDITQHP. The helical transmembrane segment at 1211 to 1227 threads the bilayer; sequence FFKRTIALLVLAQSVLL. Topologically, residues 1228–1236 are extracellular; sequence SVKWDVEDP. The chain crosses the membrane as a helical span at residues 1237–1260; it reads VTVPLATMSVVFTFIFVLEVTMKI. Topologically, residues 1261-1271 are cytoplasmic; it reads IAMSPAGFWQS. The helical transmembrane segment at 1272–1293 threads the bilayer; it reads RRNRYDLLVTSLGVVWVVLHFA. Residues 1294 to 1296 are Extracellular-facing; it reads LLN. The helical; Voltage-sensor transmembrane segment at 1297–1318 threads the bilayer; sequence AYTYMMGACVIVFRFFSICGKH. At 1319-1331 the chain is on the cytoplasmic side; that stretch reads VTLKMLLLTVVVS. A helical membrane pass occupies residues 1332 to 1357; it reads MYKSFFIIVGMFLLLLCYAFAGVVLF. Residues 1358–1378 lie on the Extracellular side of the membrane; the sequence is GTVKYGENINRHANFSSAGKA. Positions 1379–1398 form an intramembrane region, pore-forming; it reads ITVLFRIVTGEDWNKIMHDC. Residues 1399–1420 are Extracellular-facing; sequence MVQPPFCTPDEFTYWATDCGNY. Residues Cys-1405 and Cys-1417 are joined by a disulfide bond. A helical transmembrane segment spans residues 1421 to 1447; it reads AGALMYFCSFYVIIAYIMLNLLVAIIV. At 1448-1738 the chain is on the cytoplasmic side; that stretch reads ENFSLFYSTE…DESGDDLLDI (291 aa). A disordered region spans residues 1611-1679; sequence PPSIETTQPS…WRLPSAPKPI (69 aa). Residues 1613 to 1631 are compositionally biased toward polar residues; that stretch reads SIETTQPSEDTNANSQDHN. Over residues 1633–1648 the composition is skewed to low complexity; the sequence is QPESSSQQQLLSPTLS.

It belongs to the NALCN family. In terms of assembly, found in a complex with NALCN, UNC79, UNC80 and NACL1; these auxiliary subunits are indispensable for the function of NALCN channel. Interacts with UNC80; required for the NALCN activation/inhibition by GPCRs in neurons. Found in a complex with NALCN, UNC79 and UNC80; UNC80 bridges NALCN to UNC79. Interacts with CHRM3. Post-translationally, phosphorylated on tyrosine residues. In terms of tissue distribution, predominantly expressed in the brain, moderately in the heart and weakly in the pancreas.

The protein localises to the cell membrane. The catalysed reaction is Na(+)(in) = Na(+)(out). Inhibited by low micromolar concentrations of Gd(3+) and high micromolar concentrations of verapamil. Insensitive to tetrodotoxin (TTX) and potentiated by low external Ca(2+) concentration. In terms of biological role, voltage-gated ion channel responsible for the resting Na(+) permeability that controls neuronal excitability. NALCN channel functions as a multi-protein complex, which consists at least of NALCN, NALF1, UNC79 and UNC80. NALCN is the voltage-sensing, pore-forming subunit of the NALCN channel complex. NALCN channel complex is constitutively active and conducts monovalent cations but is blocked by physiological concentrations of extracellular divalent cations. In addition to its role in regulating neuronal excitability, is required for normal respiratory rhythm, systemic osmoregulation by controlling the serum sodium concentration and in the regulation of the intestinal pace-making activity in the interstitial cells of Cajal. NALCN channel is also activated by neuropeptides such as neurotensin and substance P (SP) through a SRC family kinases-dependent pathway. In addition, NALCN activity is enhanced/modulated by several GPCRs, such as CHRM3. The protein is Sodium leak channel NALCN (Nalcn) of Rattus norvegicus (Rat).